The following is a 167-amino-acid chain: N5-carboxyaminoimidazole ribonucleotide mutase (167 aa).

Positions 11, 14, and 41 each coordinate substrate.

It belongs to the AIR carboxylase family. Class I subfamily.

It carries out the reaction 5-carboxyamino-1-(5-phospho-D-ribosyl)imidazole + H(+) = 5-amino-1-(5-phospho-D-ribosyl)imidazole-4-carboxylate. It functions in the pathway purine metabolism; IMP biosynthesis via de novo pathway; 5-amino-1-(5-phospho-D-ribosyl)imidazole-4-carboxylate from 5-amino-1-(5-phospho-D-ribosyl)imidazole (N5-CAIR route): step 2/2. Functionally, catalyzes the conversion of N5-carboxyaminoimidazole ribonucleotide (N5-CAIR) to 4-carboxy-5-aminoimidazole ribonucleotide (CAIR). The polypeptide is N5-carboxyaminoimidazole ribonucleotide mutase (Aquifex aeolicus (strain VF5)).